A 462-amino-acid chain; its full sequence is cAMP-dependent protein kinase regulatory subunit (462 aa).

A dimerization and phosphorylation region spans residues 54-203 (TPSPRFPPSP…RLKYAIEGNF (150 aa)). The tract at residues 79–157 (FGANANPFGG…PTTDSYPAQY (79 aa)) is disordered. The segment covering 80–102 (GANANPFGGSSSNPNPFGGSASP) has biased composition (low complexity). At Ser-164 the chain carries Phosphoserine. Residues 204 to 333 (LFSH…FLEE), Glu-282, Arg-291, 336 to 453 (ILSS…KTGV), Glu-401, and Arg-410 each bind 3',5'-cyclic AMP.

Belongs to the cAMP-dependent kinase regulatory chain family. In terms of assembly, tetramer, composed of 2 regulatory (R) and 2 catalytic (C) subunits. In the presence of cAMP it dissociates into 2 active monomeric C subunits and an R dimer.

The polypeptide is cAMP-dependent protein kinase regulatory subunit (pkar1) (Hypocrea atroviridis (Trichoderma atroviride)).